A 184-amino-acid polypeptide reads, in one-letter code: Probable S-adenosyl-L-methionine-binding protein PYRAB06630 (184 aa).

In terms of domain architecture, TsaA-like spans 9 to 140 (YRPIGIIHSP…YVPEFDVREN (132 aa)). Residues 26–28 (PIQ), 65–66 (HR), Arg-89, and 120–123 (LDGT) each bind S-adenosyl-L-methionine.

This sequence belongs to the tRNA methyltransferase O family.

The sequence is that of Probable S-adenosyl-L-methionine-binding protein PYRAB06630 from Pyrococcus abyssi (strain GE5 / Orsay).